A 339-amino-acid chain; its full sequence is Beta-ketoacyl-[acyl-carrier-protein] synthase III (339 aa).

Catalysis depends on residues Cys-119 and His-262. Positions 263-267 (QANQR) are ACP-binding. The active site involves Asn-292.

The protein belongs to the thiolase-like superfamily. FabH family. In terms of assembly, homodimer.

It localises to the cytoplasm. The enzyme catalyses malonyl-[ACP] + acetyl-CoA + H(+) = 3-oxobutanoyl-[ACP] + CO2 + CoA. It participates in lipid metabolism; fatty acid biosynthesis. Its function is as follows. Catalyzes the condensation reaction of fatty acid synthesis by the addition to an acyl acceptor of two carbons from malonyl-ACP. Catalyzes the first condensation reaction which initiates fatty acid synthesis and may therefore play a role in governing the total rate of fatty acid production. Possesses both acetoacetyl-ACP synthase and acetyl transacylase activities. Its substrate specificity determines the biosynthesis of branched-chain and/or straight-chain of fatty acids. This is Beta-ketoacyl-[acyl-carrier-protein] synthase III from Prochlorococcus marinus (strain MIT 9313).